Here is a 693-residue protein sequence, read N- to C-terminus: MSTPFGLDLGNNNSVLAVARNRGIDVVVNEVSNRSTPSLVGFGPRNRYLGESGKTKQTSNVKNTVENLKRIIGLKFKDPEFDIENKFFTSKLVQLKNGKVGVEVEFGGKTHVFSATQLTAMFIDKVKHTVQEETKSSITDVCLAVPVWYSEEQRYNIADAARIAGLNPVRIVNDVTAAAVSYGVFKNDLPGPEEKPRIIGLVDIGHSTYTCSIMAFRKGEMKVLGTAYDKHFGGRDFDRAITEHFADQFKDKYKIDIRKNPKAYNRILIAAEKLKKVLSANTTAPFSVESVMDDIDVSSQLSREELEELVEPLLKRVTYPITNALAQAKLTVNDIDFVEIIGGTTRIPVLKKSISDVFGKPLSSTLNQDEAVAKGAAFICAIHSPTLRVRPFKFEDIDPYSVSYTWDKQVDDEDRLEVFPANSSYPSTKLITLHRTGDFSMKAVYTHPSKLPKGTSTTIAKWSFTGVKVPKDQDFIPVKVKLRCDPSGLHIIENAYTTEDITVQEPVPLPEDAPEDAEPQFKEVTKTIKKDVLGMTAKTFALNPVELNDLIEKENELRNQDKLVAETEDRKNALEEYIYTLRAKLDDEYSDFASDAEKEKLKNMLATTENWLYGDGDDSTKAKYIAKYEELASLGNIIRGRYLAKEEEKRQALRANQETSKMNDIAEKLAEQRRARAASDDSDDNNDENMDLD.

A disordered region spans residues 653 to 693; the sequence is LRANQETSKMNDIAEKLAEQRRARAASDDSDDNNDENMDLD. Residues 664–679 show a composition bias toward basic and acidic residues; that stretch reads DIAEKLAEQRRARAAS. Acidic residues predominate over residues 680–693; it reads DDSDDNNDENMDLD.

The protein belongs to the heat shock protein 70 family.

Functionally, has a calcium-dependent calmodulin-binding activity. The protein is Heat shock protein homolog SSE2 (SSE2) of Saccharomyces cerevisiae (strain ATCC 204508 / S288c) (Baker's yeast).